The sequence spans 352 residues: Chorismate synthase (352 aa).

Arginine 48 provides a ligand contact to NADP(+). FMN contacts are provided by residues 125–127 (RSS), 238–239 (NA), glycine 278, 293–297 (KPTSS), and arginine 319.

It belongs to the chorismate synthase family. In terms of assembly, homotetramer. It depends on FMNH2 as a cofactor.

It catalyses the reaction 5-O-(1-carboxyvinyl)-3-phosphoshikimate = chorismate + phosphate. The protein operates within metabolic intermediate biosynthesis; chorismate biosynthesis; chorismate from D-erythrose 4-phosphate and phosphoenolpyruvate: step 7/7. Catalyzes the anti-1,4-elimination of the C-3 phosphate and the C-6 proR hydrogen from 5-enolpyruvylshikimate-3-phosphate (EPSP) to yield chorismate, which is the branch point compound that serves as the starting substrate for the three terminal pathways of aromatic amino acid biosynthesis. This reaction introduces a second double bond into the aromatic ring system. This Legionella pneumophila subsp. pneumophila (strain Philadelphia 1 / ATCC 33152 / DSM 7513) protein is Chorismate synthase.